A 582-amino-acid polypeptide reads, in one-letter code: Tetratricopeptide repeat protein 24 (582 aa).

Residues 1–31 (MSSPNPEDVPRRPEPEPSSSNKKKKKRKWLR) form a disordered region. TPR repeat units follow at residues 36–69 (IQAL…ASKA), 79–112 (QACA…EKAQ), 117–150 (GDQC…YQPQ), 154–187 (GEAW…YAQE), 236–271 (GHLY…VPGE), 273–306 (ATVL…HGSV), 313–346 (GRSF…ARDS), and 353–386 (WQAC…CQKE). Disordered stretches follow at residues 418–481 (TSAP…RAGP) and 548–582 (VPNG…CTIV). Residues 441-454 (GSSTAGVQHRSSSG) are compositionally biased toward polar residues. Residues 462–472 (EGHQKKKEERS) show a composition bias toward basic and acidic residues.

This is Tetratricopeptide repeat protein 24 (TTC24) from Homo sapiens (Human).